The following is a 314-amino-acid chain: Methionyl-tRNA formyltransferase (314 aa).

110–113 (SLLP) lines the (6S)-5,6,7,8-tetrahydrofolate pocket.

It belongs to the Fmt family.

The enzyme catalyses L-methionyl-tRNA(fMet) + (6R)-10-formyltetrahydrofolate = N-formyl-L-methionyl-tRNA(fMet) + (6S)-5,6,7,8-tetrahydrofolate + H(+). Attaches a formyl group to the free amino group of methionyl-tRNA(fMet). The formyl group appears to play a dual role in the initiator identity of N-formylmethionyl-tRNA by promoting its recognition by IF2 and preventing the misappropriation of this tRNA by the elongation apparatus. The polypeptide is Methionyl-tRNA formyltransferase (Lactobacillus gasseri (strain ATCC 33323 / DSM 20243 / BCRC 14619 / CIP 102991 / JCM 1131 / KCTC 3163 / NCIMB 11718 / NCTC 13722 / AM63)).